The sequence spans 163 residues: ATP synthase subunit b 1 (163 aa).

A helical transmembrane segment spans residues 7 to 27 (PETWVAIAFVILMGLFAYLGV).

This sequence belongs to the ATPase B chain family. As to quaternary structure, F-type ATPases have 2 components, F(1) - the catalytic core - and F(0) - the membrane proton channel. F(1) has five subunits: alpha(3), beta(3), gamma(1), delta(1), epsilon(1). F(0) has three main subunits: a(1), b(2) and c(10-14). The alpha and beta chains form an alternating ring which encloses part of the gamma chain. F(1) is attached to F(0) by a central stalk formed by the gamma and epsilon chains, while a peripheral stalk is formed by the delta and b chains.

The protein resides in the cell inner membrane. F(1)F(0) ATP synthase produces ATP from ADP in the presence of a proton or sodium gradient. F-type ATPases consist of two structural domains, F(1) containing the extramembraneous catalytic core and F(0) containing the membrane proton channel, linked together by a central stalk and a peripheral stalk. During catalysis, ATP synthesis in the catalytic domain of F(1) is coupled via a rotary mechanism of the central stalk subunits to proton translocation. Its function is as follows. Component of the F(0) channel, it forms part of the peripheral stalk, linking F(1) to F(0). The protein is ATP synthase subunit b 1 of Bradyrhizobium sp. (strain BTAi1 / ATCC BAA-1182).